The chain runs to 302 residues: Putative RING-H2 finger protein ATL35 (302 aa).

Residues 1-31 form the signal peptide; sequence MTIFARDLIYRIETKVLLPLFLVHLLPYVTC. A helical transmembrane segment spans residues 50–70; the sequence is TVIAIIVLAIFISLSMVACFL. The RING-type; atypical zinc-finger motif lies at 123–165; the sequence is CAICLSEFVDKETLRWMPPCSHTFHANCIDVWLSSQSTCPACR. Ser226 bears the Phosphoserine mark.

This sequence belongs to the RING-type zinc finger family. ATL subfamily.

It is found in the membrane. The catalysed reaction is S-ubiquitinyl-[E2 ubiquitin-conjugating enzyme]-L-cysteine + [acceptor protein]-L-lysine = [E2 ubiquitin-conjugating enzyme]-L-cysteine + N(6)-ubiquitinyl-[acceptor protein]-L-lysine.. Its pathway is protein modification; protein ubiquitination. The sequence is that of Putative RING-H2 finger protein ATL35 (ATL35) from Arabidopsis thaliana (Mouse-ear cress).